The chain runs to 318 residues: sn-1 stearoyl-lipid 9-desaturase (318 aa).

Transmembrane regions (helical) follow at residues 56–76 (VIFF…PQFF) and 80–100 (AVGM…TLGF). The Histidine box-1 signature appears at 101–106 (HRCISH). A helical transmembrane segment spans residues 117 to 137 (YIFVICGTLACQGGVFEWVGL). A Histidine box-2 motif is present at residues 138 to 142 (HRMHH). Residues 201 to 221 (VALGLILFALGGWPFVIWGIF) form a helical membrane-spanning segment. The Histidine box-3 signature appears at 271-275 (HHAYQ).

It belongs to the fatty acid desaturase type 2 family. It depends on Fe(2+) as a cofactor.

It localises to the cellular thylakoid membrane. The enzyme catalyses a 1-octadecanoyl 2-acyl-glycerolipid + 2 reduced [2Fe-2S]-[ferredoxin] + O2 + 2 H(+) = a 1-[(9Z)-octadecenoyl]-2-acyl-glycerolipid + 2 oxidized [2Fe-2S]-[ferredoxin] + 2 H2O. It participates in lipid metabolism; polyunsaturated fatty acid biosynthesis. Functionally, desaturase involved in fatty acid biosynthesis. Introduces a double bond at carbon 9 of stearoyl groups (18:0) attached to the sn-1 position of the glycerol moiety of membrane glycerolipids. Does not desaturate palmitic acid (16:0), palmitoleic acid (16:1) and cis-vaccenic acid (18:1). The protein is sn-1 stearoyl-lipid 9-desaturase of Synechocystis sp. (strain ATCC 27184 / PCC 6803 / Kazusa).